The following is a 414-amino-acid chain: Gamma-glutamyl phosphate reductase (414 aa).

The protein belongs to the gamma-glutamyl phosphate reductase family.

The protein localises to the cytoplasm. It carries out the reaction L-glutamate 5-semialdehyde + phosphate + NADP(+) = L-glutamyl 5-phosphate + NADPH + H(+). Its pathway is amino-acid biosynthesis; L-proline biosynthesis; L-glutamate 5-semialdehyde from L-glutamate: step 2/2. In terms of biological role, catalyzes the NADPH-dependent reduction of L-glutamate 5-phosphate into L-glutamate 5-semialdehyde and phosphate. The product spontaneously undergoes cyclization to form 1-pyrroline-5-carboxylate. This chain is Gamma-glutamyl phosphate reductase, found in Francisella philomiragia subsp. philomiragia (strain ATCC 25017 / CCUG 19701 / FSC 153 / O#319-036).